A 577-amino-acid chain; its full sequence is MNIQSLINDKVSQALEAAGAPAGSPAAVRQSAKAQFGDYQANGVMGVAKRLGTNPREFAQKVLDVLDLDGIASKTEIAGPGFINIFLSEEFLAKQAEAALADERLGVAKEEQQNIVADYSAPNVAKEMHVGHLRSTIIGDAVVRTLEFLGHNVTRANHIGDWGTQFGMLIANLERIQKEKGEVSMELSDLEGFYRESKKLYDEDEEFAVTARGYVVKLQSGDEFCAEMWKKLVDVTMVQNQRNYDRLNVSLTRDNVMGESMYNSMLAPIVADLQKQGLAVESEGAQVVFLDEYKNKDGEPMGVIVQKRDGGFLYTTTDIACAKYRYEELNADRVLYFIDSRQHQHLMQAWTIVRKAGYVPESVSLEHHAFGMMLGKDGRPFKTRAGGTVRLADLLDEAEERATKLIEEKNKDLSAEEKAKIATTVAMAAVKYSDLSKHRTTDYIFDWDNMLAFEGNTAPYMQYAYTRVASIFSKAGLSMDELTGEVKITDEKEKALVAKLMQFEEAVQAVASEGQPHLMCAYLFELAGQFSSFYEACPILNNEDDAVKQSRLKLAALTAKTIKQGLELLGIETLERM.

The short motif at 122-132 is the 'HIGH' region element; the sequence is PNVAKEMHVGH.

The protein belongs to the class-I aminoacyl-tRNA synthetase family. As to quaternary structure, monomer.

Its subcellular location is the cytoplasm. The enzyme catalyses tRNA(Arg) + L-arginine + ATP = L-arginyl-tRNA(Arg) + AMP + diphosphate. The protein is Arginine--tRNA ligase of Aliivibrio fischeri (strain ATCC 700601 / ES114) (Vibrio fischeri).